Reading from the N-terminus, the 242-residue chain is Ubiquinone biosynthesis O-methyltransferase (242 aa).

Positions 44, 64, 85, and 129 each coordinate S-adenosyl-L-methionine.

It belongs to the methyltransferase superfamily. UbiG/COQ3 family.

It catalyses the reaction a 3-demethylubiquinol + S-adenosyl-L-methionine = a ubiquinol + S-adenosyl-L-homocysteine + H(+). The catalysed reaction is a 3-(all-trans-polyprenyl)benzene-1,2-diol + S-adenosyl-L-methionine = a 2-methoxy-6-(all-trans-polyprenyl)phenol + S-adenosyl-L-homocysteine + H(+). It functions in the pathway cofactor biosynthesis; ubiquinone biosynthesis. In terms of biological role, O-methyltransferase that catalyzes the 2 O-methylation steps in the ubiquinone biosynthetic pathway. In Citrobacter koseri (strain ATCC BAA-895 / CDC 4225-83 / SGSC4696), this protein is Ubiquinone biosynthesis O-methyltransferase.